The sequence spans 200 residues: Prolactin (200 aa).

Cystine bridges form between Cys4–Cys11, Cys59–Cys175, and Cys192–Cys200.

It belongs to the somatotropin/prolactin family. In terms of tissue distribution, pituitary gland.

It localises to the secreted. The protein is Prolactin (prl) of Protopterus aethiopicus (Marbled lungfish).